Consider the following 308-residue polypeptide: uncharacterized protein (308 aa).

An N-terminal signal peptide occupies residues 1 to 17 (MKSLALLLSLLINFSIG). Asn-13, Asn-91, Asn-159, and Asn-210 each carry an N-linked (GlcNAc...) asparagine glycan. The segment at 213–308 (DEISGGTGAG…HDNYISSFCT (96 aa)) is disordered. Composition is skewed to gly residues over residues 217-231 (GGTG…GSGS) and 239-252 (SDGG…GSGS). A compositionally biased stretch (low complexity) spans 267 to 284 (NKNNNKNKNNNNNNNNYN).

The protein resides in the secreted. This is an uncharacterized protein from Dictyostelium discoideum (Social amoeba).